Here is a 461-residue protein sequence, read N- to C-terminus: Propanal dehydrogenase (CoA-propanoylating) (461 aa).

A targets protein to the BMC region spans residues 1–18 (MNTSELETLIRNILSEQL).

This sequence belongs to the EutE/PduP family. Interacts with PduK, probably with its BMC-containing N-terminus. Interacts with shell proteins PduA and PduJ, interacts with PduQ.

The protein localises to the bacterial microcompartment. It carries out the reaction propanal + NAD(+) + CoA = propanoyl-CoA + NADH + H(+). It participates in polyol metabolism; 1,2-propanediol degradation. Its function is as follows. A CoA-acylating aldehyde dehydrogenase required for optimal 1,2-propanediol (1,2-PD) degradation. Optimizes growth in the bacterial microcompartment (BMC) dedicated to 1,2-PD degradation by minimizing propionaldehyde toxicity. NAD(+) and NADH are regenerated internally within the Pdu BMC by the PduP and PduQ enzymes, which reduce NAD(+) and oxidize NADH respectively, although there must also be cofactor transport across the BMC. Directly targeted to the BMC. In terms of biological role, expression of a cosmid containing the full 21-gene pdu operon in E.coli allows E.coli to grow on 1,2-propanediol (1,2-PD) with the appearance of bacterial microcompartments (BMC) in its cytoplasm. The 1,2-PD-specific bacterial microcompartment (BMC) concentrates low levels of 1,2-PD catabolic enzymes, concentrates volatile reaction intermediates thus enhancing pathway flux and keeps the level of toxic, mutagenic propionaldehyde low. This chain is Propanal dehydrogenase (CoA-propanoylating), found in Citrobacter freundii.